We begin with the raw amino-acid sequence, 220 residues long: Demethylmenaquinone methyltransferase (220 aa).

S-adenosyl-L-methionine-binding positions include T47, D67, and 93 to 94 (DA).

It belongs to the class I-like SAM-binding methyltransferase superfamily. MenG/UbiE family.

The enzyme catalyses a 2-demethylmenaquinol + S-adenosyl-L-methionine = a menaquinol + S-adenosyl-L-homocysteine + H(+). Its pathway is quinol/quinone metabolism; menaquinone biosynthesis; menaquinol from 1,4-dihydroxy-2-naphthoate: step 2/2. Functionally, methyltransferase required for the conversion of demethylmenaquinol (DMKH2) to menaquinol (MKH2). The chain is Demethylmenaquinone methyltransferase from Thermus thermophilus (strain ATCC BAA-163 / DSM 7039 / HB27).